A 550-amino-acid chain; its full sequence is CTP synthase (550 aa).

The segment at 1–271 is amidoligase domain; sequence MTRYIFITGG…DAEVLDVFGM (271 aa). Residue serine 13 coordinates CTP. Serine 13 contacts UTP. ATP is bound at residue 14–19; it reads SLGKGL. Residue tyrosine 54 participates in L-glutamine binding. Aspartate 71 contacts ATP. Mg(2+) contacts are provided by aspartate 71 and glutamate 145. Residues 152–154, 192–197, and lysine 228 each bind CTP; these read DIE and KTKPTQ. Residues 192–197 and lysine 228 each bind UTP; that span reads KTKPTQ. A Glutamine amidotransferase type-1 domain is found at 297 to 549; that stretch reads TIAVVGKYTV…IAAAKEQGRL (253 aa). Glycine 361 serves as a coordination point for L-glutamine. Cysteine 388 serves as the catalytic Nucleophile; for glutamine hydrolysis. Residues 389–392, glutamate 412, and arginine 477 each bind L-glutamine; that span reads FGMQ. Active-site residues include histidine 522 and glutamate 524.

Belongs to the CTP synthase family. In terms of assembly, homotetramer.

It catalyses the reaction UTP + L-glutamine + ATP + H2O = CTP + L-glutamate + ADP + phosphate + 2 H(+). It carries out the reaction L-glutamine + H2O = L-glutamate + NH4(+). The enzyme catalyses UTP + NH4(+) + ATP = CTP + ADP + phosphate + 2 H(+). Its pathway is pyrimidine metabolism; CTP biosynthesis via de novo pathway; CTP from UDP: step 2/2. With respect to regulation, allosterically activated by GTP, when glutamine is the substrate; GTP has no effect on the reaction when ammonia is the substrate. The allosteric effector GTP functions by stabilizing the protein conformation that binds the tetrahedral intermediate(s) formed during glutamine hydrolysis. Inhibited by the product CTP, via allosteric rather than competitive inhibition. Catalyzes the ATP-dependent amination of UTP to CTP with either L-glutamine or ammonia as the source of nitrogen. Regulates intracellular CTP levels through interactions with the four ribonucleotide triphosphates. In Caulobacter sp. (strain K31), this protein is CTP synthase.